The sequence spans 435 residues: MAESATDSGNVAEQYSLLPKLMPNLDRHLIYPLLNFSADEDAEQPLDQKKLLLELLKPTNMTDFVGQLYQDVHNLDDMPDEYKTKRDQVLQRRDKLEEETSKISGLLDDENVVTNLRSDKVQNLAYLKDTHGVTVEMVNQLYEFGSFQYSCGVYPHAAELLYRFRVLVRNIQEREATWGKLACEFLSVNWDSAIEEINKLKETIDTRLFNNPLAQLQHRTWLIHWSLFPLFNHEPARESLTDMFFSPSYINTIQTNCPWILRYLAAAVITNRNKGRNSNQYQKQLKDLIRIVRQEGYEYSDPVTDFIKALYIDFDFEEAQKKLSETEEILKNDFFLLGAADQFVDAARHLISESYCKIHQRIDIKDLSTRLGLSQDEGEKWIVNLIRDTRVDAKIDYKAGTVIMNHPPQSVYQQVIERTKGGFFRTQVLSAAVAK.

The PCI domain occupies 241–409 (TDMFFSPSYI…GTVIMNHPPQ (169 aa)).

Belongs to the eIF-3 subunit E family. In terms of assembly, component of the eukaryotic translation initiation factor 3 (eIF-3) complex.

Its subcellular location is the cytoplasm. Functionally, component of the eukaryotic translation initiation factor 3 (eIF-3) complex, which is involved in protein synthesis of a specialized repertoire of mRNAs and, together with other initiation factors, stimulates binding of mRNA and methionyl-tRNAi to the 40S ribosome. The eIF-3 complex specifically targets and initiates translation of a subset of mRNAs involved in cell proliferation. This chain is Eukaryotic translation initiation factor 3 subunit E, found in Phaeosphaeria nodorum (strain SN15 / ATCC MYA-4574 / FGSC 10173) (Glume blotch fungus).